A 187-amino-acid chain; its full sequence is UPF0301 protein YqgE (187 aa).

Belongs to the UPF0301 (AlgH) family.

This chain is UPF0301 protein YqgE, found in Salmonella paratyphi B (strain ATCC BAA-1250 / SPB7).